A 154-amino-acid polypeptide reads, in one-letter code: MINKIKKNPDTEVYALGQHICMSAHKARRVIDQIRGRSYEETLMILELMPYRACYPIFKLVYSAAANASHNMGFNEADLIISKAEVNEGPTMKRLKPRARGRSYPIKRPTCHITIVLKDISLDEEYLIWLRKYGWIYRNKYTDRMCRDKYGIVG.

It belongs to the universal ribosomal protein uL22 family. As to quaternary structure, part of the 50S ribosomal subunit.

The protein resides in the plastid. It localises to the chloroplast. Its function is as follows. This protein binds specifically to 23S rRNA. Functionally, the globular domain of the protein is located near the polypeptide exit tunnel on the outside of the subunit, while an extended beta-hairpin is found that lines the wall of the exit tunnel in the center of the 70S ribosome. The polypeptide is Large ribosomal subunit protein uL22c (rpl22) (Platanus occidentalis (Sycamore)).